The primary structure comprises 437 residues: Succinate--CoA ligase [ADP-forming] subunit beta, hydrogenosomal (437 aa).

A hydrogenosome-targeting transit peptide spans 1–27 (MLANVTRSTSKAAPALASIAQTAQKRF). In terms of domain architecture, ATP-grasp spans 36–278 (MNLLHEYNVN…TTQEDPREVA (243 aa)). Residues Lys73, 80–82 (GRG), and Glu141 contribute to the ATP site. Residues Asn233 and Asp247 each coordinate Mg(2+). Residues Asn299 and 356 to 358 (GIM) each bind substrate.

The protein belongs to the succinate/malate CoA ligase beta subunit family. In terms of assembly, heterodimer of an alpha and a beta subunit. Requires Mg(2+) as cofactor.

The protein localises to the hydrogenosome. It carries out the reaction succinate + ATP + CoA = succinyl-CoA + ADP + phosphate. The protein operates within carbohydrate metabolism; tricarboxylic acid cycle; succinate from succinyl-CoA (ligase route): step 1/1. Functionally, succinyl-CoA synthetase functions in the citric acid cycle (TCA), coupling the hydrolysis of succinyl-CoA to the synthesis of ATP and thus represents the only step of substrate-level phosphorylation in the TCA. The beta subunit provides nucleotide specificity of the enzyme and binds the substrate succinate, while the binding sites for coenzyme A and phosphate are found in the alpha subunit. This chain is Succinate--CoA ligase [ADP-forming] subunit beta, hydrogenosomal, found in Neocallimastix frontalis (Rumen fungus).